A 361-amino-acid polypeptide reads, in one-letter code: Serpentine receptor class X 45 (361 aa).

Transmembrane regions (helical) follow at residues 20–40 (LLIF…AFYI), 58–78 (AAGD…VLFF), 92–112 (FAQL…VISL), 133–153 (TTFL…FLVI), 176–196 (MINV…MFAI), 242–262 (LLYV…PVPL), and 278–298 (LLTT…TLIF). Asn317 is a glycosylation site (N-linked (GlcNAc...) asparagine).

The protein belongs to the G-protein coupled receptor 1 family.

It is found in the cell membrane. The protein is Serpentine receptor class X 45 (srx-45) of Caenorhabditis elegans.